The primary structure comprises 137 residues: Proofreading thioesterase EntH (137 aa).

Glutamate 63 functions as the Nucleophile or proton acceptor in the catalytic mechanism.

This sequence belongs to the thioesterase PaaI family. As to quaternary structure, homotetramer. Dimer of dimers. Interacts specifically with the aryl carrier protein (ArCP) domain of EntB.

Its subcellular location is the cytoplasm. Its pathway is siderophore biosynthesis; enterobactin biosynthesis. Required for optimal enterobactin synthesis. Acts as a proofreading enzyme that prevents EntB misacylation by hydrolyzing the thioester bound existing between EntB and wrongly charged molecules. In Klebsiella pneumoniae subsp. pneumoniae (strain ATCC 700721 / MGH 78578), this protein is Proofreading thioesterase EntH (entH).